The sequence spans 485 residues: Glycogen synthase (485 aa).

Residue Lys20 coordinates ADP-alpha-D-glucose.

It belongs to the glycosyltransferase 1 family. Bacterial/plant glycogen synthase subfamily.

It catalyses the reaction [(1-&gt;4)-alpha-D-glucosyl](n) + ADP-alpha-D-glucose = [(1-&gt;4)-alpha-D-glucosyl](n+1) + ADP + H(+). It participates in glycan biosynthesis; glycogen biosynthesis. Its function is as follows. Synthesizes alpha-1,4-glucan chains using ADP-glucose. The protein is Glycogen synthase of Vibrio parahaemolyticus serotype O3:K6 (strain RIMD 2210633).